The sequence spans 119 residues: uncharacterized protein (119 aa).

This is an uncharacterized protein from Ureaplasma parvum serovar 3 (strain ATCC 700970).